The primary structure comprises 493 residues: Ribose import ATP-binding protein RbsA (493 aa).

2 consecutive ABC transporter domains span residues 5-241 (LKIS…VGRR) and 252-491 (EKGE…AAAI). 37–44 (GENGAGKS) provides a ligand contact to ATP.

Belongs to the ABC transporter superfamily. Ribose importer (TC 3.A.1.2.1) family. As to quaternary structure, the complex is composed of an ATP-binding protein (RbsA), two transmembrane proteins (RbsC) and a solute-binding protein (RbsB).

The protein resides in the cell inner membrane. The catalysed reaction is D-ribose(out) + ATP + H2O = D-ribose(in) + ADP + phosphate + H(+). In terms of biological role, part of the ABC transporter complex RbsABC involved in ribose import. Responsible for energy coupling to the transport system. The protein is Ribose import ATP-binding protein RbsA of Haemophilus influenzae (strain 86-028NP).